Reading from the N-terminus, the 282-residue chain is Sulfur carrier protein FdhD (282 aa).

Cys-126 serves as the catalytic Cysteine persulfide intermediate. 265-270 (FVRNNR) contacts Mo-bis(molybdopterin guanine dinucleotide).

This sequence belongs to the FdhD family.

The protein localises to the cytoplasm. Functionally, required for formate dehydrogenase (FDH) activity. Acts as a sulfur carrier protein that transfers sulfur from IscS to the molybdenum cofactor prior to its insertion into FDH. The chain is Sulfur carrier protein FdhD from Thermoplasma acidophilum (strain ATCC 25905 / DSM 1728 / JCM 9062 / NBRC 15155 / AMRC-C165).